The primary structure comprises 612 residues: UvrABC system protein C (612 aa).

Positions 18-96 (TRPGVYRMMD…IKTLKPPYNI (79 aa)) constitute a GIY-YIG domain. The 36-residue stretch at 208–243 (PEIINETIQQMEVASAQLDFERAAVLRDQVDYLRRV) folds into the UVR domain.

Belongs to the UvrC family. As to quaternary structure, interacts with UvrB in an incision complex.

It localises to the cytoplasm. In terms of biological role, the UvrABC repair system catalyzes the recognition and processing of DNA lesions. UvrC both incises the 5' and 3' sides of the lesion. The N-terminal half is responsible for the 3' incision and the C-terminal half is responsible for the 5' incision. The chain is UvrABC system protein C from Hahella chejuensis (strain KCTC 2396).